A 240-amino-acid chain; its full sequence is Mannose-binding protein C (240 aa).

Positions 1–18 (MSLFPSLHLLLLIVMTAS) are cleaved as a signal peptide. Collagen-like domains are found at residues 39-61 (SPGINGLPGKDGLDGAKGEKGEP) and 67-97 (GLQGLPGMVGPQGSPGIPGLPGLKGQKGDSG). Position 46 is a hydroxyproline (P46). The disordered stretch occupies residues 48-102 (KDGLDGAKGEKGEPGQGLIGLQGLPGMVGPQGSPGIPGLPGLKGQKGDSGIDPGN). Positions 49 to 60 (DGLDGAKGEKGE) are enriched in basic and acidic residues. A hydroxyproline mark is found at P72, P81, and P87. Positions 104–122 (LANLRSELDNIKKWLIFAQ) form a coiled coil. The C-type lectin domain occupies 126–237 (VGKKLYLTNG…CSSQLSAVCE (112 aa)). Cystine bridges form between C147-C236 and C214-C228.

As to quaternary structure, interacts with MASP1 and MASP2. Interacts with MEP1A and MEP1B and may inhibit their catalytic activity. Forms oligomeric complexes of 2 or 3 homotrimers. As to expression, expressed in liver. Weakly expressed in kidney and testis.

The protein resides in the secreted. Functionally, calcium-dependent lectin involved in innate immune defense. Binds mannose, fucose and N-acetylglucosamine on different microorganisms and activates the lectin complement pathway. Binds to late apoptotic cells, as well as to apoptotic blebs and to necrotic cells, but not to early apoptotic cells, facilitating their uptake by macrophages. According to some authors, it only binds mannose. The sequence is that of Mannose-binding protein C from Sus scrofa (Pig).